The primary structure comprises 226 residues: Late protein I226R (226 aa).

A signal peptide spans 1–16; it reads MKMETFLVCLFHNAKG. Residue Asn164 is glycosylated (N-linked (GlcNAc...) asparagine; by host).

Belongs to the asfivirus I226R family.

Plays a role in the inhibition of host NF-kappa-B and IRF3 signaling pathways. Mechanistically, promotes the degradation of host IKBKG through enhancing its ubiquitination leading to inhibition of both pathways. The chain is Late protein I226R from Ornithodoros (relapsing fever ticks).